A 636-amino-acid chain; its full sequence is 1-deoxy-D-xylulose-5-phosphate synthase (636 aa).

Thiamine diphosphate contacts are provided by residues histidine 75 and 116 to 118 (AHS). Mg(2+) is bound at residue aspartate 147. Thiamine diphosphate contacts are provided by residues 148–149 (GA), asparagine 177, tyrosine 288, and glutamate 370. Asparagine 177 provides a ligand contact to Mg(2+).

This sequence belongs to the transketolase family. DXPS subfamily. In terms of assembly, homodimer. It depends on Mg(2+) as a cofactor. The cofactor is thiamine diphosphate.

It carries out the reaction D-glyceraldehyde 3-phosphate + pyruvate + H(+) = 1-deoxy-D-xylulose 5-phosphate + CO2. It functions in the pathway metabolic intermediate biosynthesis; 1-deoxy-D-xylulose 5-phosphate biosynthesis; 1-deoxy-D-xylulose 5-phosphate from D-glyceraldehyde 3-phosphate and pyruvate: step 1/1. In terms of biological role, catalyzes the acyloin condensation reaction between C atoms 2 and 3 of pyruvate and glyceraldehyde 3-phosphate to yield 1-deoxy-D-xylulose-5-phosphate (DXP). The protein is 1-deoxy-D-xylulose-5-phosphate synthase of Ralstonia pickettii (strain 12J).